The following is a 98-amino-acid chain: C-X-C motif chemokine 10 (98 aa).

The first 21 residues, 1 to 21 (MNQSAVLIFCLIFLTLNGTQG), serve as a signal peptide directing secretion. Position 26 is a citrulline (Arg-26). 2 disulfide bridges follow: Cys-30–Cys-57 and Cys-32–Cys-74.

The protein belongs to the intercrine alpha (chemokine CxC) family. In terms of assembly, monomer, dimer, and tetramer. Interacts with CXCR3 (via N-terminus).

Its subcellular location is the secreted. Its function is as follows. Pro-inflammatory cytokine that is involved in a wide variety of processes such as chemotaxis, differentiation, and activation of peripheral immune cells, regulation of cell growth, apoptosis and modulation of angiostatic effects. Plays thereby an important role during viral infections by stimulating the activation and migration of immune cells to the infected sites. Mechanistically, binding of CXCL10 to the CXCR3 receptor activates G protein-mediated signaling and results in downstream activation of phospholipase C-dependent pathway, an increase in intracellular calcium production and actin reorganization. In turn, recruitment of activated Th1 lymphocytes occurs at sites of inflammation. Activation of the CXCL10/CXCR3 axis also plays an important role in neurons in response to brain injury for activating microglia, the resident macrophage population of the central nervous system, and directing them to the lesion site. This recruitment is an essential element for neuronal reorganization. In Canis lupus familiaris (Dog), this protein is C-X-C motif chemokine 10 (CXCL10).